Here is a 358-residue protein sequence, read N- to C-terminus: Probable anti-sigma-M factor YhdL (358 aa).

Residues 74–96 (ISVLAVISTLMILPLCTLGSYLY) form a helical membrane-spanning segment.

As to quaternary structure, the N-terminus of YhdL interacts with sigma-M. YhdL interacts specifically with YhdK.

The protein localises to the membrane. The polypeptide is Probable anti-sigma-M factor YhdL (yhdL) (Bacillus subtilis (strain 168)).